Reading from the N-terminus, the 172-residue chain is MSEFHQDLSEEKSKSQVKRELHALQELGERLAGLRPEQLDRLPLTDALRRALLDAPKHTAHIARKRHIQYIGKLMRDQDIDAILALFEQLDASSRQYNERFHALERWRDRLLDGGDEALEAFVGDYPDTDRQHLRGLIRQARHETAQNKPPAASRKIFKYIRDLDESRRGLR.

Belongs to the DarP family.

It localises to the cytoplasm. Member of a network of 50S ribosomal subunit biogenesis factors which assembles along the 30S-50S interface, preventing incorrect 23S rRNA structures from forming. Promotes peptidyl transferase center (PTC) maturation. This chain is Dual-action ribosomal maturation protein DarP, found in Azotobacter vinelandii (strain DJ / ATCC BAA-1303).